A 422-amino-acid polypeptide reads, in one-letter code: Phagosome assembly factor 1 (422 aa).

The protein belongs to the PHAF1 family. As to quaternary structure, interacts with BCAS3; the interaction is requrired for the association with the phagophore.

Its subcellular location is the cytoplasm. It is found in the preautophagosomal structure. Functionally, plays a regulatory role in autophagic activity. In complex with BCAS3, associates with the autophagosome formation site during both non-selective and selective autophagy. This chain is Phagosome assembly factor 1, found in Homo sapiens (Human).